Consider the following 491-residue polypeptide: Probable protein phosphatase 2C 6 (491 aa).

Positions 1 to 16 are enriched in basic and acidic residues; that stretch reads MGLCHSKIDKTTRKET. The disordered stretch occupies residues 1–39; it reads MGLCHSKIDKTTRKETGATSTATTTVERQSSGRLRRPRD. Low complexity predominate over residues 17 to 28; the sequence is GATSTATTTVER. The PPM-type phosphatase domain maps to 64 to 376; that stretch reads IACLYTQQGK…DDCAVVCLFL (313 aa). Mn(2+)-binding residues include Asp100, Gly101, Asp321, and Asp367. Residues 391–422 are disordered; that stretch reads VNHSHEESTESVTITSSKDADKKEEASTETNE.

This sequence belongs to the PP2C family. Mg(2+) is required as a cofactor. Mn(2+) serves as cofactor.

The catalysed reaction is O-phospho-L-seryl-[protein] + H2O = L-seryl-[protein] + phosphate. It catalyses the reaction O-phospho-L-threonyl-[protein] + H2O = L-threonyl-[protein] + phosphate. The protein is Probable protein phosphatase 2C 6 of Arabidopsis thaliana (Mouse-ear cress).